The primary structure comprises 113 residues: Nucleoid-associated protein Syncc9605_0027 (113 aa).

The protein belongs to the YbaB/EbfC family. Homodimer.

It is found in the cytoplasm. It localises to the nucleoid. Functionally, binds to DNA and alters its conformation. May be involved in regulation of gene expression, nucleoid organization and DNA protection. This is Nucleoid-associated protein Syncc9605_0027 from Synechococcus sp. (strain CC9605).